Reading from the N-terminus, the 370-residue chain is MRPGLSAKRLVVKVGSAVLTGERGLDLEAMAEIARQVAALREEGREVVLVSSGAVAAGMRRLGLKERPKDMPKKQALAALGQPLLMAFWQEAFAPFGLPVAQVLLTAEDLSSRSRYLNAKATLRALLDLGAIPVINENDTVAFEEIRFGDNDQLSARVAALVEAGLLALLSDVDALYEEDPKKNPQARPIPEVESVEAVLAHAGEENPLGSGGMKSKLLAARIAGRVGIPTLLLPGKRPGVLLQALSGAPLGTYFHARRRYRGEKAWLFGLLRPKGELVLDRGAVRALKERGASLLPAGVKEVRGRFSRGEAVRLLSEEGEEVGVGLANYASEEIARIKGRRSAEIEAVLGYRYTEEVVHRDHLALKEEA.

ATP is bound at residue K13. 3 residues coordinate substrate: S52, D139, and N151. ATP-binding positions include S171–D172 and S211–K217. Residues K275 to R353 enclose the PUA domain.

Belongs to the glutamate 5-kinase family.

The protein localises to the cytoplasm. The enzyme catalyses L-glutamate + ATP = L-glutamyl 5-phosphate + ADP. Its pathway is amino-acid biosynthesis; L-proline biosynthesis; L-glutamate 5-semialdehyde from L-glutamate: step 1/2. Functionally, catalyzes the transfer of a phosphate group to glutamate to form L-glutamate 5-phosphate. The sequence is that of Glutamate 5-kinase from Thermus thermophilus (strain ATCC BAA-163 / DSM 7039 / HB27).